The following is a 165-amino-acid chain: K(+)/H(+) antiporter subunit KhtT (165 aa).

Residues 76–161 (LESIEMAFSD…LKKLIHDFLS (86 aa)) enclose the RCK C-terminal domain.

As to quaternary structure, the transporter is composed of the integral membrane protein KhtU and the regulatory protein KhtT.

Its subcellular location is the cell membrane. With respect to regulation, binds cyclic di-AMP (c-di-AMP), which may regulate the activity. Its function is as follows. Required for activity of the potassium/proton antiporter KhtU. Involved in protection of the cell from methylglyoxal, a toxic by-product of glycolysis. In Bacillus subtilis (strain 168), this protein is K(+)/H(+) antiporter subunit KhtT.